Reading from the N-terminus, the 160-residue chain is Cytochrome b6-f complex subunit 4 (160 aa).

3 consecutive transmembrane segments (helical) span residues 36–56 (LLYV…GLAV), 95–115 (LLGI…PFIE), and 131–151 (AVFL…TFPI).

Belongs to the cytochrome b family. PetD subfamily. In terms of assembly, the 4 large subunits of the cytochrome b6-f complex are cytochrome b6, subunit IV (17 kDa polypeptide, PetD), cytochrome f and the Rieske protein, while the 4 small subunits are PetG, PetL, PetM and PetN. The complex functions as a dimer.

It is found in the cellular thylakoid membrane. Component of the cytochrome b6-f complex, which mediates electron transfer between photosystem II (PSII) and photosystem I (PSI), cyclic electron flow around PSI, and state transitions. This Crocosphaera subtropica (strain ATCC 51142 / BH68) (Cyanothece sp. (strain ATCC 51142)) protein is Cytochrome b6-f complex subunit 4.